A 695-amino-acid chain; its full sequence is MAP kinase phosphatase with leucine-rich repeats protein 2 (695 aa).

LRR repeat units follow at residues 101-122, 124-145, 147-167, 170-191, 193-214, 215-235, 239-260, 262-283, 286-307, and 309-330; these read SLKS…ITLL, NLNH…LSQL, SLET…NVCK, SLTS…FLNL, NLKD…LPNN, IEKL…SLIR, SLTT…LSCL, NVKT…VLGS, SLVT…VILL, and NLRI…IPTE. The segment covering 413 to 426 has biased composition (low complexity); sequence SENNEINENNQLLT. 2 disordered regions span residues 413 to 438 and 492 to 519; these read SENN…KNDS and QEQL…QQQQ. The 140-residue stretch at 556–695 folds into the Tyrosine-protein phosphatase domain; the sequence is VPDLIIDKLY…LKKFEKDLFK (140 aa). Cysteine 639 serves as the catalytic Phosphocysteine intermediate.

The protein belongs to the protein-tyrosine phosphatase family. Non-receptor class dual specificity subfamily.

The catalysed reaction is O-phospho-L-tyrosyl-[protein] + H2O = L-tyrosyl-[protein] + phosphate. It catalyses the reaction O-phospho-L-seryl-[protein] + H2O = L-seryl-[protein] + phosphate. The enzyme catalyses O-phospho-L-threonyl-[protein] + H2O = L-threonyl-[protein] + phosphate. Its function is as follows. Probable phosphatase with dual specificity toward Ser/Thr and Tyr-containing proteins. The polypeptide is MAP kinase phosphatase with leucine-rich repeats protein 2 (mpl2) (Dictyostelium discoideum (Social amoeba)).